The chain runs to 362 residues: Aspartate carbamoyltransferase catalytic subunit (362 aa).

Residues 1–22 are disordered; it reads MPKTAMTDSTSKTSTNTASSDM. Over residues 7-20 the composition is skewed to low complexity; the sequence is TDSTSKTSTNTASS. The carbamoyl phosphate site is built by Arg100 and Thr101. Lys128 lines the L-aspartate pocket. Residues Arg150, His180, and Gln183 each contribute to the carbamoyl phosphate site. Arg214 and Arg269 together coordinate L-aspartate. Carbamoyl phosphate-binding residues include Gly310 and Pro311.

This sequence belongs to the aspartate/ornithine carbamoyltransferase superfamily. ATCase family. As to quaternary structure, heterododecamer (2C3:3R2) of six catalytic PyrB chains organized as two trimers (C3), and six regulatory PyrI chains organized as three dimers (R2).

It carries out the reaction carbamoyl phosphate + L-aspartate = N-carbamoyl-L-aspartate + phosphate + H(+). Its pathway is pyrimidine metabolism; UMP biosynthesis via de novo pathway; (S)-dihydroorotate from bicarbonate: step 2/3. In terms of biological role, catalyzes the condensation of carbamoyl phosphate and aspartate to form carbamoyl aspartate and inorganic phosphate, the committed step in the de novo pyrimidine nucleotide biosynthesis pathway. This Psychrobacter sp. (strain PRwf-1) protein is Aspartate carbamoyltransferase catalytic subunit.